Here is a 125-residue protein sequence, read N- to C-terminus: Large ribosomal subunit protein bL12 (125 aa).

Belongs to the bacterial ribosomal protein bL12 family. Homodimer. Part of the ribosomal stalk of the 50S ribosomal subunit. Forms a multimeric L10(L12)X complex, where L10 forms an elongated spine to which 2 to 4 L12 dimers bind in a sequential fashion. Binds GTP-bound translation factors.

Functionally, forms part of the ribosomal stalk which helps the ribosome interact with GTP-bound translation factors. Is thus essential for accurate translation. The chain is Large ribosomal subunit protein bL12 from Coprothermobacter proteolyticus (strain ATCC 35245 / DSM 5265 / OCM 4 / BT).